The chain runs to 276 residues: Alpha N-terminal protein methyltransferase 1 (276 aa).

S-adenosyl-L-methionine is bound by residues glycine 96, arginine 101, 118–120 (EPV), 149–150 (LQ), and glutamine 165.

Belongs to the methyltransferase superfamily. NTM1 family.

The enzyme catalyses N-terminal L-alanyl-L-prolyl-L-lysyl-[protein] + 3 S-adenosyl-L-methionine = N-terminal N,N,N-trimethyl-L-alanyl-L-prolyl-L-lysyl-[protein] + 3 S-adenosyl-L-homocysteine + 3 H(+). The catalysed reaction is N-terminal L-seryl-L-prolyl-L-lysyl-[protein] + 3 S-adenosyl-L-methionine = N-terminal N,N,N-trimethyl-L-seryl-L-prolyl-L-lysyl-[protein] + 3 S-adenosyl-L-homocysteine + 3 H(+). It catalyses the reaction N-terminal L-prolyl-L-prolyl-L-lysyl-[protein] + 2 S-adenosyl-L-methionine = N-terminal N,N-dimethyl-L-prolyl-L-prolyl-L-lysyl-[protein] + 2 S-adenosyl-L-homocysteine + 2 H(+). Functionally, alpha-N-methyltransferase that methylates the N-terminus of target proteins containing the N-terminal motif [Ala/Pro/Ser]-Pro-Lys when the initiator Met is cleaved. Specifically catalyzes mono-, di- or tri-methylation of exposed alpha-amino group of Ala or Ser residue in the [Ala/Ser]-Pro-Lys motif and mono- or di-methylation of Pro in the Pro-Pro-Lys motif. The sequence is that of Alpha N-terminal protein methyltransferase 1 from Arabidopsis thaliana (Mouse-ear cress).